The chain runs to 882 residues: Cadherin-1 (882 aa).

An N-terminal signal peptide occupies residues 1–23 (MGPWSRSLSALCCCCRCNPWLCR). Residues 24-154 (EPEPCIPGFG…PHHGLRRQKR (131 aa)) constitute a propeptide that is removed on maturation. The disordered stretch occupies residues 117 to 137 (EVSAHHHHHHSHHDSPSGTQT). 5 Cadherin domains span residues 154–262 (RDWV…KPQF), 263–375 (TQEV…APRF), 376–486 (NPTT…APIF), 487–595 (VPPQ…GPVP), and 594–702 (VPEP…RPAE). Over 155-709 (DWVIPPISCP…PAEAGLQVPA (555 aa)) the chain is Extracellular. The O-linked (Man...) serine glycan is linked to S280. Residues T285, T358, T470, T472, and T509 are each glycosylated (O-linked (Man...) threonine). N558 is a glycosylation site (N-linked (GlcNAc...) asparagine). Residues T576, T578, and T580 are each glycosylated (O-linked (Man...) threonine). The N-linked (GlcNAc...) asparagine glycan is linked to N637. A helical membrane pass occupies residues 710 to 730 (ILGILGGILAFLILILLLLLL). The Cytoplasmic portion of the chain corresponds to 731 to 882 (VRRRRVVKEP…ADMYGGGEDD (152 aa)). The interval 747-767 (DTRDNVYYYDEEGGGEEDQDF) is disordered. 3 positions are modified to phosphotyrosine; by SRC: Y753, Y754, and Y755. Positions 755–767 (YDEEGGGEEDQDF) are enriched in acidic residues. A required for binding CTNND1 and PSEN1 region spans residues 758–769 (EGGGEEDQDFDL). Phosphoserine is present on residues S770, S793, S838, S840, and S846. The segment at 811 to 882 (IDENLKAADS…ADMYGGGEDD (72 aa)) is required for binding alpha, beta and gamma catenins.

In terms of assembly, homodimer; disulfide-linked. Component of an E-cadherin/ catenin adhesion complex composed of at least E-cadherin/CDH1, beta-catenin/CTNNB1 or gamma-catenin/JUP, and potentially alpha-catenin/CTNNA1; the complex is located to adherens junctions. Found in a complex composed of CDH1, RAP1A and PKP3; PKP3 acts as a scaffold protein within the complex, the complex is required for CDH1 localization to mature desmosome cell junctions. Interacts with the TRPV4 and CTNNB1 complex. Interacts with CTNND1. The stable association of CTNNA1 is controversial as CTNNA1 was shown not to bind to F-actin when assembled in the complex. Alternatively, the CTNNA1-containing complex may be linked to F-actin by other proteins such as LIMA1. Interaction with PSEN1, cleaves CDH1 resulting in the disassociation of cadherin-based adherens junctions (CAJs). Interacts with AJAP1 and DLGAP5. Interacts with TBC1D2. Interacts with CAV1. Interacts with PIP5K1C. Interacts with RAB8B. Interacts with DDR1; this stabilizes CDH1 at the cell surface and inhibits its internalization. Interacts with RAPGEF2. Interacts with KLRG1. Forms a ternary complex composed of ADAM10, CADH1 and EPHA4; within the complex, CADH1 is cleaved by ADAM10 which disrupts adherens junctions. Interacts with SPEF1. Interacts with CTNNB1 and PKP2. Interacts with AMOTL2; the interaction may facilitate binding of radial actin fibers to cell junction complexes. Interacts with DSG3; the interaction is required for CDH1 localization to developing adherens junctions. In terms of processing, during apoptosis or with calcium influx, cleaved by a membrane-bound metalloproteinase (ADAM10), PS1/gamma-secretase and caspase-3. Processing by the metalloproteinase, induced by calcium influx, causes disruption of cell-cell adhesion and the subsequent release of beta-catenin into the cytoplasm. The residual membrane-tethered cleavage product is rapidly degraded via an intracellular proteolytic pathway. Cleavage by caspase-3 releases the cytoplasmic tail resulting in disintegration of the actin microfilament system. The gamma-secretase-mediated cleavage promotes disassembly of adherens junctions. During development of the cochlear organ of Corti, cleavage by ADAM10 at adherens junctions promotes pillar cell separation. N-glycosylation at Asn-637 is essential for expression, folding and trafficking. Addition of bisecting N-acetylglucosamine by MGAT3 modulates its cell membrane location. Post-translationally, ubiquitinated by a SCF complex containing SKP2, which requires prior phosphorylation by CK1/CSNK1A1. Ubiquitinated by CBLL1/HAKAI, requires prior phosphorylation at Tyr-754. In terms of processing, O-glycosylated. O-manosylated by TMTC1, TMTC2, TMTC3 or TMTC4. Thr-285 and Thr-509 are O-mannosylated by TMTC2 or TMTC4 but not TMTC1 or TMTC3.

The protein localises to the cell junction. The protein resides in the adherens junction. It localises to the cell membrane. Its subcellular location is the endosome. It is found in the golgi apparatus. The protein localises to the trans-Golgi network. The protein resides in the cytoplasm. It localises to the desmosome. Functionally, cadherins are calcium-dependent cell adhesion proteins. They preferentially interact with themselves in a homophilic manner in connecting cells; cadherins may thus contribute to the sorting of heterogeneous cell types. CDH1 is involved in mechanisms regulating cell-cell adhesions, mobility and proliferation of epithelial cells. Promotes organization of radial actin fiber structure and cellular response to contractile forces, via its interaction with AMOTL2 which facilitates anchoring of radial actin fibers to CDH1 junction complexes at the cell membrane. Plays a role in the early stages of desmosome cell-cell junction formation via facilitating the recruitment of DSG2 and DSP to desmosome plaques. Has a potent invasive suppressor role. It is a ligand for integrin alpha-E/beta-7. Its function is as follows. E-Cad/CTF2 promotes non-amyloidogenic degradation of Abeta precursors. Has a strong inhibitory effect on APP C99 and C83 production. In Bos taurus (Bovine), this protein is Cadherin-1 (CDH1).